Reading from the N-terminus, the 340-residue chain is MQKKVLSLVLVLAVLESIVPVSAWGTITHVRMSSEAGNPYTGFKMEYLSGSIAPDAGYIISTEWGTKFHGYYVNDALNIANKMLSLAEGTDEKAFAKGWLAHLMQDRVAHGNGDGLPKDQAYGEGYSNYAAKKYGLTHIEAEFFVNGRVIHEKGWDWDFVRFAVPTELIVKTMRSLYGSAPNENDLNNAYNTFAMEYYGELAFWNSPSGNTAYLTLLLFGTVSDYDDYVSDVHCNPYEESIYLTNHPNARSTYAAGTYIMGVKKVKSSDGQIKKWMKEYAERLEKAGAIKVNRKFEDGWLVIEFRMVDKYKADRIAKEVLQDMARSEEIFQFINLKGDEK.

The first 23 residues, 1–23 (MQKKVLSLVLVLAVLESIVPVSA), serve as a signal peptide directing secretion.

This is an uncharacterized protein from Archaeoglobus fulgidus (strain ATCC 49558 / DSM 4304 / JCM 9628 / NBRC 100126 / VC-16).